The primary structure comprises 516 residues: Threonine synthase 2, chloroplastic (516 aa).

The transit peptide at 1 to 33 (MASFSLPHSATYFPSHSETSLKPHSAASFTVRC) directs the protein to the chloroplast. A compositionally biased stretch (polar residues) spans 1 to 37 (MASFSLPHSATYFPSHSETSLKPHSAASFTVRCTSAS). The interval 1–55 (MASFSLPHSATYFPSHSETSLKPHSAASFTVRCTSASPAVPPQTPQKPRRSPDEN) is disordered. S-adenosyl-L-methionine contacts are provided by residues 133-135 (PYG), 156-158 (SAF), Asn-163, Leu-164, Lys-172, and Asn-178. Lys-194 is subject to N6-(pyridoxal phosphate)lysine. Residues 326-330 (GNLGN) and Thr-464 each bind pyridoxal 5'-phosphate.

The protein belongs to the threonine synthase family. As to quaternary structure, homodimer. Pyridoxal 5'-phosphate is required as a cofactor.

Its subcellular location is the plastid. The protein localises to the chloroplast. It carries out the reaction O-phospho-L-homoserine + H2O = L-threonine + phosphate. Its pathway is amino-acid biosynthesis; L-threonine biosynthesis; L-threonine from L-aspartate: step 5/5. With respect to regulation, allosterically activated by S-adenosyl-methionine (SAM). In terms of biological role, catalyzes the gamma-elimination of phosphate from L-phosphohomoserine and the beta-addition of water to produce L-threonine. The polypeptide is Threonine synthase 2, chloroplastic (TS2) (Arabidopsis thaliana (Mouse-ear cress)).